The chain runs to 107 residues: Sperm protamine P1 (107 aa).

Composition is skewed to basic and acidic residues over residues Ala-1–Phe-10 and Arg-20–Gly-33. Positions Ala-1–Gly-35 are cleaved as a propeptide — removed in mature form. The segment at Ala-1 to Lys-107 is disordered. The span at His-34 to Lys-107 shows a compositional bias: basic residues. At Ser-42 the chain carries Phosphoserine.

In terms of processing, a series of N-terminal cleavages yield the mature protein. Only the mature protein is phosphorylated. Gonads.

The protein localises to the nucleus. The protein resides in the chromosome. Protamines substitute for histones in the chromatin of sperm during the haploid phase of spermatogenesis. They compact sperm DNA into a highly condensed, stable and inactive complex. The polypeptide is Sperm protamine P1 (Bolinus brandaris (Purple dye murex)).